Here is a 313-residue protein sequence, read N- to C-terminus: tRNA-cytidine(32) 2-sulfurtransferase (313 aa).

The PP-loop motif motif lies at 50–55 (SGGKDS). Residues C125, C128, and C216 each coordinate [4Fe-4S] cluster.

Belongs to the TtcA family. As to quaternary structure, homodimer. Mg(2+) is required as a cofactor. [4Fe-4S] cluster serves as cofactor.

The protein resides in the cytoplasm. It catalyses the reaction cytidine(32) in tRNA + S-sulfanyl-L-cysteinyl-[cysteine desulfurase] + AH2 + ATP = 2-thiocytidine(32) in tRNA + L-cysteinyl-[cysteine desulfurase] + A + AMP + diphosphate + H(+). Its pathway is tRNA modification. Catalyzes the ATP-dependent 2-thiolation of cytidine in position 32 of tRNA, to form 2-thiocytidine (s(2)C32). The sulfur atoms are provided by the cysteine/cysteine desulfurase (IscS) system. The polypeptide is tRNA-cytidine(32) 2-sulfurtransferase (Haemophilus influenzae (strain ATCC 51907 / DSM 11121 / KW20 / Rd)).